Here is a 201-residue protein sequence, read N- to C-terminus: Sec-independent protein translocase protein TatB (201 aa).

A helical membrane pass occupies residues 1 to 21 (MLDLGWSEILVIAVVLIVVVG). The interval 96-201 (LSEAAKAKPA…RRKKTAGTAP (106 aa)) is disordered. Composition is skewed to low complexity over residues 102–114 (AKPA…AADS) and 159–187 (TSAK…APAK). A compositionally biased stretch (basic residues) spans 189–201 (PSPRRKKTAGTAP).

It belongs to the TatB family. As to quaternary structure, the Tat system comprises two distinct complexes: a TatABC complex, containing multiple copies of TatA, TatB and TatC subunits, and a separate TatA complex, containing only TatA subunits. Substrates initially bind to the TatABC complex, which probably triggers association of the separate TatA complex to form the active translocon.

It localises to the cell inner membrane. Its function is as follows. Part of the twin-arginine translocation (Tat) system that transports large folded proteins containing a characteristic twin-arginine motif in their signal peptide across membranes. Together with TatC, TatB is part of a receptor directly interacting with Tat signal peptides. TatB may form an oligomeric binding site that transiently accommodates folded Tat precursor proteins before their translocation. The polypeptide is Sec-independent protein translocase protein TatB (Chelativorans sp. (strain BNC1)).